Reading from the N-terminus, the 101-residue chain is UPF0060 membrane protein ACIAD1364 (101 aa).

3 helical membrane-spanning segments follow: residues 24–44 (WLWL…TLHP), 50–70 (IYAA…RFID), and 79–99 (IWGG…PQGL).

Belongs to the UPF0060 family.

Its subcellular location is the cell inner membrane. This Acinetobacter baylyi (strain ATCC 33305 / BD413 / ADP1) protein is UPF0060 membrane protein ACIAD1364.